The primary structure comprises 320 residues: Cytochrome f (320 aa).

Residues 1–35 form the signal peptide; it reads MQTRNAFSWIKKEITRSISVLLMIYIITRAPISNA. Heme contacts are provided by tyrosine 36, cysteine 56, cysteine 59, and histidine 60. The chain crosses the membrane as a helical span at residues 286–305; sequence VQGLLLFLASIILAQILLVL.

It belongs to the cytochrome f family. As to quaternary structure, the 4 large subunits of the cytochrome b6-f complex are cytochrome b6, subunit IV (17 kDa polypeptide, petD), cytochrome f and the Rieske protein, while the 4 small subunits are PetG, PetL, PetM and PetN. The complex functions as a dimer. Requires heme as cofactor.

It is found in the plastid. The protein localises to the chloroplast thylakoid membrane. In terms of biological role, component of the cytochrome b6-f complex, which mediates electron transfer between photosystem II (PSII) and photosystem I (PSI), cyclic electron flow around PSI, and state transitions. In Pisum sativum (Garden pea), this protein is Cytochrome f (petA).